A 128-amino-acid polypeptide reads, in one-letter code: Large ribosomal subunit protein bL17 (128 aa).

Belongs to the bacterial ribosomal protein bL17 family. In terms of assembly, part of the 50S ribosomal subunit. Contacts protein L32.

The polypeptide is Large ribosomal subunit protein bL17 (Streptococcus pneumoniae serotype 2 (strain D39 / NCTC 7466)).